The sequence spans 103 residues: ATP-dependent Clp protease adapter protein ClpS (103 aa).

It belongs to the ClpS family. As to quaternary structure, binds to the N-terminal domain of the chaperone ClpA.

In terms of biological role, involved in the modulation of the specificity of the ClpAP-mediated ATP-dependent protein degradation. This is ATP-dependent Clp protease adapter protein ClpS from Neisseria meningitidis serogroup A / serotype 4A (strain DSM 15465 / Z2491).